We begin with the raw amino-acid sequence, 198 residues long: MAQINPLPVPLGPWKITVYDQENFQGKRMEFTSSCANIMECGFDNIRSLKVECGGWIGYEHTSFCGQQFVLERGEYPRWDAWSGSNAYHIERLMSFRPICSANHKESKLVIFEKENFIGRQWEMCDDYPSLQAMGWVNNEVGSMKVQCGSWVCYQYPGYRGYQYILESDHHGGEYKHWREWGSHAQTFQIQSIRRIQQ.

The N-terminal arm stretch occupies residues methionine 1–proline 13. 2 consecutive Beta/gamma crystallin 'Greek key' domains span residues tryptophan 14–cysteine 53 and glycine 54–cysteine 100. Positions serine 101 to glutamate 106 are connecting peptide. 2 consecutive Beta/gamma crystallin 'Greek key' domains span residues serine 107–cysteine 148 and glycine 149–glutamine 197.

Belongs to the beta/gamma-crystallin family. In terms of assembly, homo/heterodimer, or complexes of higher-order. The structure of beta-crystallin oligomers seems to be stabilized through interactions between the N-terminal arms.

Functionally, crystallins are the dominant structural components of the vertebrate eye lens. This is Beta-crystallin A1 from Rana temporaria (European common frog).